Here is a 330-residue protein sequence, read N- to C-terminus: MKKIAVDAMGGDYAPQAIVEGVNQALSDFSDIEVQLYGDEAKIKQYLTATERVSIIHTDEKIDSDDEPTRAIRNKKNASMVLAAKAVKDGEADAVLSAGNTGALLAAGFFIVGRIKNIDRPGLMSTLPTVDGKGFDMLDLGANAENTAQHLHQYAVLGSFYAKNVRGIAQPRVGLLNNGTESSKGDPLRKETYELLAADESLNFIGNVEARDLMNGVADVVVADGFTGNAVLKSIEGTAMGIMGLLKTAITGGGLRAKLGALLLKDSLRGLKKQLNYSDVGGAVLFGVKAPVVKTHGSSDAKAVYSTIRQIRTMLETDVVAQTAREFSGE.

This sequence belongs to the PlsX family. As to quaternary structure, homodimer. Probably interacts with PlsY.

The protein localises to the cytoplasm. The catalysed reaction is a fatty acyl-[ACP] + phosphate = an acyl phosphate + holo-[ACP]. It participates in lipid metabolism; phospholipid metabolism. Functionally, catalyzes the reversible formation of acyl-phosphate (acyl-PO(4)) from acyl-[acyl-carrier-protein] (acyl-ACP). This enzyme utilizes acyl-ACP as fatty acyl donor, but not acyl-CoA. This chain is Phosphate acyltransferase, found in Streptococcus pneumoniae serotype 2 (strain D39 / NCTC 7466).